The primary structure comprises 2273 residues: Linear gramicidin synthase subunit A (2273 aa).

The interval M1–W144 is GART. Carrier domains are found at residues A693–K767 and A1724–Q1798. Residues S728 and S1759 each carry the O-(pantetheine 4'-phosphoryl)serine modification.

This sequence belongs to the ATP-dependent AMP-binding enzyme family. In terms of assembly, large multienzyme complex composed of 4 subunits; LgrA, LgrB, LgrC and LgrD. Requires pantetheine 4'-phosphate as cofactor.

In terms of biological role, activates valine (or leucine, but much less frequently), and then glycine and catalyzes the formation of the peptide bond in the first step of peptide synthesis. This enzyme may also play a role in N-formylation of the first amino acid residue in the synthesized dipeptide. This Brevibacillus parabrevis protein is Linear gramicidin synthase subunit A (lgrA).